The chain runs to 116 residues: CDKN2AIP N-terminal-like protein (116 aa).

Methionine 1 bears the N-acetylmethionine mark. One can recognise an XRN2-binding (XTBD) domain in the interval 24–116 (AEQFRSYSES…RSELMKKHQS (93 aa)).

This sequence belongs to the CARF family. Interacts with XRN2; the interaction is direct.

This Bos taurus (Bovine) protein is CDKN2AIP N-terminal-like protein (CDKN2AIPNL).